The primary structure comprises 269 residues: Tryptophan synthase alpha chain (269 aa).

Catalysis depends on proton acceptor residues Glu56 and Asp67.

This sequence belongs to the TrpA family. In terms of assembly, tetramer of two alpha and two beta chains.

It catalyses the reaction (1S,2R)-1-C-(indol-3-yl)glycerol 3-phosphate + L-serine = D-glyceraldehyde 3-phosphate + L-tryptophan + H2O. Its pathway is amino-acid biosynthesis; L-tryptophan biosynthesis; L-tryptophan from chorismate: step 5/5. The alpha subunit is responsible for the aldol cleavage of indoleglycerol phosphate to indole and glyceraldehyde 3-phosphate. This is Tryptophan synthase alpha chain from Mycobacterium marinum (strain ATCC BAA-535 / M).